A 77-amino-acid polypeptide reads, in one-letter code: U11-lycotoxin-Ls1a (77 aa).

The signal sequence occupies residues 1–20; sequence MKLIILTGLVLFAIVSLIEA. The propeptide occupies 21-26; it reads EEESGR.

The protein belongs to the neurotoxin 19 (CSTX) family. 10 (U11-Lctx) subfamily. Post-translationally, contains 4 disulfide bonds. In terms of tissue distribution, expressed by the venom gland.

It localises to the secreted. The sequence is that of U11-lycotoxin-Ls1a from Lycosa singoriensis (Wolf spider).